Consider the following 458-residue polypeptide: O-acetyltransferase dmxR13 (458 aa).

The tract at residues 211–231 (ELARQISQPRPPPSSDGPPPP) is disordered. Positions 219–231 (PRPPPSSDGPPPP) are enriched in pro residues.

Belongs to the trichothecene 3-O-acetyltransferase family.

Its pathway is secondary metabolite biosynthesis. Its function is as follows. O-acetyltransferase; part of the gene cluster that mediates the biosynthesis of the dimeric xanthones cryptosporioptides. The pathway begins with the synthesis of atrochrysone thioester by the polyketide synthase dmx-nrPKS. The atrochrysone carboxyl ACP thioesterase dmxR1 then breaks the thioester bond and releases the atrochrysone carboxylic acid from dmx-nrPKS. Atrochrysone carboxylic acid is decarboxylated by the decarboxylase dmxR15, and oxidized by the anthrone oxygenase dmxR16 to yield emodin. Emodin is then reduced to emodin hydroquinone by the oxidoreductase dmxR7. A-ring reduction by the short chain dehydrogenase dmxR18, dehydration by the scytalone dehydratase-like protein dmxR17 and probable spontaneous re-oxidation, results in overall deoxygenation to chrysophanol. Baeyer-Villiger oxidation by the Baeyer-Villiger monooxygenase (BVMO) dmxR6 then yields monodictylactone in equilibrium with monodictyphenone. In the case of the cryptosporioptides biosynthesis, monodictylactone is reduced at C-12 to an alcohol (by the short chain dehydrogenases dmxR12 or dmxR8) and hydroxylated at C-5 by dmxR9, yielding the electron-rich aromatic which could eliminate H(2)O to form the ortho-quinonemethide, followed by tautomerisation to paraquinone and complete the formal reduction to produce the 10-methylgroup. Conjugate addition of C-4a-OH to the resulting paraquinone by the monooxygenase dmxR10 then gives cyclohexadienone, which is then reduced at C-5 by the short chain dehydrogenase dmxR3 to give the dihydroxanthone. The 6,7-epoxide in the cryptosporioptides could be introduced by the cytochrome P450 monooxygenase dmxL3. The highly reducing PKS dmxL2 manufactures butyrate, which is further carboxylated by dmxL1 to form ethylmalonate. It is not yet clear whether the carboxylation occurs while the butyrate is attached to the ACP of dmxL2, but this unusual fungal metabolite could then be esterified to O-5 by the O-acetyltransferase dmxR13. Finally, dimerization performed by dmxR5 gives the observed dimers cryptosporioptides A, B and C as the final products of the pathway. This chain is O-acetyltransferase dmxR13, found in Cryptosporiopsis sp. (strain 8999).